Reading from the N-terminus, the 201-residue chain is Extracellular superoxide dismutase [Cu-Zn] (201 aa).

The first 42 residues, 1–42, serve as a signal peptide directing secretion; it reads MINSFIVIFLSFLIFINYANLVCVEATHVYGRRSHSNGMHGN. Cu cation is bound by residues His89, His91, and His106. Cys100 and Cys192 form a disulfide bridge. Zn(2+) is bound by residues His106, His114, His123, and Asp126. His163 provides a ligand contact to Cu cation.

This sequence belongs to the Cu-Zn superoxide dismutase family. As to quaternary structure, homodimer. Cu cation is required as a cofactor. The cofactor is Zn(2+).

Its subcellular location is the secreted. It is found in the extracellular space. It catalyses the reaction 2 superoxide + 2 H(+) = H2O2 + O2. In terms of biological role, destroys radicals which are normally produced within the cells and which are toxic to biological systems. May act in the parasite defense against phagocyte-generated reactive oxygen species. This chain is Extracellular superoxide dismutase [Cu-Zn] (sod-4), found in Onchocerca volvulus.